The primary structure comprises 825 residues: Zygotic DNA replication licensing factor mcm6-B (825 aa).

The C4-type zinc-finger motif lies at 159-186 (CLDCQTLVRDVEQQFKYTQPSICRNPVC). The MCM domain maps to 347-554 (LYHNLCTSLF…TDYAIARRIV (208 aa)). Position 397 to 404 (397 to 404 (GDPSTAKS)) interacts with ATP. The Arginine finger signature appears at 529-532 (SRFD). Residues 668–679 (DQEDEHEVEEPQ) are compositionally biased toward acidic residues. The segment at 668–690 (DQEDEHEVEEPQEGINGDADVPN) is disordered.

Belongs to the MCM family. Component of the mcm2-7 complex (RLF-M). The complex forms a toroidal hexameric ring with the proposed subunit order mcm2-mcm6-mcm4-mcm7-mcm3-mcm5 (By simililarity). Begins to associate with zmcm3, mcm4 and mcm7 into mcm complexes at the neurula stage.

The protein localises to the nucleus. It catalyses the reaction ATP + H2O = ADP + phosphate + H(+). Functionally, acts as a component of the mcm2-7 complex (mcm complex) which is the putative replicative helicase essential for 'once per cell cycle' DNA replication initiation and elongation in eukaryotic cells. The active ATPase sites in the mcm2-7 ring are formed through the interaction surfaces of two neighboring subunits such that a critical structure of a conserved arginine finger motif is provided in trans relative to the ATP-binding site of the Walker A box of the adjacent subunit. The six ATPase active sites, however, are likely to contribute differentially to the complex helicase activity. The existence of maternal and zygotic forms of mcm3 and mcm6 suggests that specific forms of mcm2-7 complexes may be used during different stages of development. May replace mmcm6 in the mcm2-7 complex. The protein is Zygotic DNA replication licensing factor mcm6-B (zmcm6-b) of Xenopus laevis (African clawed frog).